The primary structure comprises 345 residues: Hemin transport protein HmuS (345 aa).

The protein to Y.enterocolitica HemS.

Part of the binding-protein-dependent transport system for hemin. This chain is Hemin transport protein HmuS (hmuS), found in Yersinia pestis.